A 540-amino-acid chain; its full sequence is Phosphoenolpyruvate carboxykinase (ATP) (540 aa).

R65 provides a ligand contact to substrate. K87 is subject to N6-acetyllysine. Residues Y207 and K213 each contribute to the substrate site. ATP is bound by residues K213, H232, and 248-256 (GLSGTGKTT). Residues K213 and H232 each contribute to the Mn(2+) site. D269 contributes to the Mn(2+) binding site. ATP contacts are provided by residues E297, R333, 449–450 (RI), and T455. R333 provides a ligand contact to substrate. K523 bears the N6-acetyllysine mark.

It belongs to the phosphoenolpyruvate carboxykinase (ATP) family. In terms of assembly, monomer. Requires Mn(2+) as cofactor.

It localises to the cytoplasm. The enzyme catalyses oxaloacetate + ATP = phosphoenolpyruvate + ADP + CO2. It functions in the pathway carbohydrate biosynthesis; gluconeogenesis. Its function is as follows. Involved in the gluconeogenesis. Catalyzes the conversion of oxaloacetate (OAA) to phosphoenolpyruvate (PEP) through direct phosphoryl transfer between the nucleoside triphosphate and OAA. The protein is Phosphoenolpyruvate carboxykinase (ATP) of Shigella dysenteriae serotype 1 (strain Sd197).